The sequence spans 416 residues: Serine hydroxymethyltransferase (416 aa).

(6S)-5,6,7,8-tetrahydrofolate contacts are provided by residues Leu-121 and 125–127 (GHL). At Lys-229 the chain carries N6-(pyridoxal phosphate)lysine.

This sequence belongs to the SHMT family. Homodimer. It depends on pyridoxal 5'-phosphate as a cofactor.

The protein resides in the cytoplasm. The catalysed reaction is (6R)-5,10-methylene-5,6,7,8-tetrahydrofolate + glycine + H2O = (6S)-5,6,7,8-tetrahydrofolate + L-serine. It functions in the pathway one-carbon metabolism; tetrahydrofolate interconversion. It participates in amino-acid biosynthesis; glycine biosynthesis; glycine from L-serine: step 1/1. Functionally, catalyzes the reversible interconversion of serine and glycine with tetrahydrofolate (THF) serving as the one-carbon carrier. This reaction serves as the major source of one-carbon groups required for the biosynthesis of purines, thymidylate, methionine, and other important biomolecules. Also exhibits THF-independent aldolase activity toward beta-hydroxyamino acids, producing glycine and aldehydes, via a retro-aldol mechanism. This is Serine hydroxymethyltransferase from Neisseria meningitidis serogroup C (strain 053442).